The primary structure comprises 303 residues: METKDWYKLTFLIESDSEEIIIWKLNELGIFSFSFEYLIKNENKKEVNIWLPIDDWDESSRSSFEKIIIKLLNINPPKNKFFEWSIIKQEDWLTSWKKYWAPELVGNHFLILPCWINLNKKFKDKQIIKIDPGAAFGTGSHPSTYLCLEKMENILFSDKKVLDIGSGSGILSVAARLLGAKEVCAVDNDYLAINSTKSNFQLNFGNLNKLNTYLGSFNEVILKNQLEQFDFVLCNILAEVIKGMIPNIYKCLRNNGEVIFSGILNSQKDEIIKILIQHDLKLLDVSTRKDWACISAQKASNST.

S-adenosyl-L-methionine-binding residues include Thr-144, Gly-165, Asp-187, and Asn-235.

Belongs to the methyltransferase superfamily. PrmA family.

The protein localises to the cytoplasm. It catalyses the reaction L-lysyl-[protein] + 3 S-adenosyl-L-methionine = N(6),N(6),N(6)-trimethyl-L-lysyl-[protein] + 3 S-adenosyl-L-homocysteine + 3 H(+). Its function is as follows. Methylates ribosomal protein L11. This chain is Ribosomal protein L11 methyltransferase, found in Prochlorococcus marinus (strain MIT 9301).